The following is a 215-amino-acid chain: MRTCPDCAAWCAYVDGEGSQLQRREMCAHLQGCTHCATCVAHYRAMRSLVKHADRVSSRDFTMAFPYLRVRHRVASCMPRPWWQARSSPLSAAGPVRAAALAVAVASLCVCTLLLTHIVERRPVSRAGEASFTPIVPMRVRAPVGYARGVKVFGPAVSANSNVLRKPAAVFTVCAFAQLYGSDPAYEMETVPVRLSVIPVPSYVLNASKAQFFSP.

The helical transmembrane segment at Ala98–Val119 threads the bilayer.

The protein localises to the membrane. This is an uncharacterized protein from Treponema pallidum (strain Nichols).